A 295-amino-acid chain; its full sequence is ATP synthase gamma chain (295 aa).

It belongs to the ATPase gamma chain family. F-type ATPases have 2 components, CF(1) - the catalytic core - and CF(0) - the membrane proton channel. CF(1) has five subunits: alpha(3), beta(3), gamma(1), delta(1), epsilon(1). CF(0) has three main subunits: a, b and c.

It is found in the cell membrane. Produces ATP from ADP in the presence of a proton gradient across the membrane. The gamma chain is believed to be important in regulating ATPase activity and the flow of protons through the CF(0) complex. This chain is ATP synthase gamma chain, found in Herpetosiphon aurantiacus (strain ATCC 23779 / DSM 785 / 114-95).